A 364-amino-acid polypeptide reads, in one-letter code: 3-dehydroquinate synthase (364 aa).

Residues 105–109 (GVVGD), 129–130 (TT), K142, and K151 contribute to the NAD(+) site. Zn(2+) contacts are provided by E184, H247, and H264.

It belongs to the sugar phosphate cyclases superfamily. Dehydroquinate synthase family. It depends on Co(2+) as a cofactor. Requires Zn(2+) as cofactor. The cofactor is NAD(+).

Its subcellular location is the cytoplasm. The catalysed reaction is 7-phospho-2-dehydro-3-deoxy-D-arabino-heptonate = 3-dehydroquinate + phosphate. Its pathway is metabolic intermediate biosynthesis; chorismate biosynthesis; chorismate from D-erythrose 4-phosphate and phosphoenolpyruvate: step 2/7. Catalyzes the conversion of 3-deoxy-D-arabino-heptulosonate 7-phosphate (DAHP) to dehydroquinate (DHQ). In Acidithiobacillus ferrooxidans (strain ATCC 23270 / DSM 14882 / CIP 104768 / NCIMB 8455) (Ferrobacillus ferrooxidans (strain ATCC 23270)), this protein is 3-dehydroquinate synthase.